Reading from the N-terminus, the 330-residue chain is DNA-directed RNA polymerase subunit alpha (330 aa).

An alpha N-terminal domain (alpha-NTD) region spans residues 1-232 (MAILAFQKPE…SHFSLFAENK (232 aa)). The segment at 248 to 330 (EDSLHMRQLL…DISKYKLDKD (83 aa)) is alpha C-terminal domain (alpha-CTD).

This sequence belongs to the RNA polymerase alpha chain family. In terms of assembly, homodimer. The RNAP catalytic core consists of 2 alpha, 1 beta, 1 beta' and 1 omega subunit. When a sigma factor is associated with the core the holoenzyme is formed, which can initiate transcription.

It carries out the reaction RNA(n) + a ribonucleoside 5'-triphosphate = RNA(n+1) + diphosphate. Its function is as follows. DNA-dependent RNA polymerase catalyzes the transcription of DNA into RNA using the four ribonucleoside triphosphates as substrates. The protein is DNA-directed RNA polymerase subunit alpha of Porphyromonas gingivalis (strain ATCC BAA-308 / W83).